We begin with the raw amino-acid sequence, 154 residues long: uncharacterized protein (154 aa).

The signal sequence occupies residues 1-33 (MTKRGIQAFAGGIILATAVLAAVFYLTDEDQAA).

This is an uncharacterized protein from Bacillus subtilis (strain 168).